Reading from the N-terminus, the 204-residue chain is Transmembrane protein 186 (204 aa).

The Mitochondrial matrix portion of the chain corresponds to methionine 1–lysine 69. A helical membrane pass occupies residues valine 70–glycine 90. At glutamine 91–aspartate 95 the chain is on the mitochondrial intermembrane side. Residues alanine 96 to tyrosine 116 traverse the membrane as a helical segment. Topologically, residues alanine 117–asparagine 204 are mitochondrial matrix.

Belongs to the TMEM186 family. As to quaternary structure, associates with mitochondrial complex I assembly intermediates during its biogenesis.

The protein resides in the mitochondrion inner membrane. As part of the MCIA complex, required for efficient assembly of the mitochondrial complex I. The chain is Transmembrane protein 186 from Drosophila melanogaster (Fruit fly).